Here is a 426-residue protein sequence, read N- to C-terminus: Enolase (426 aa).

Q165 provides a ligand contact to (2R)-2-phosphoglycerate. The Proton donor role is filled by E207. Positions 244, 285, and 312 each coordinate Mg(2+). (2R)-2-phosphoglycerate is bound by residues K337, R366, S367, and K388. K337 acts as the Proton acceptor in catalysis.

This sequence belongs to the enolase family. Mg(2+) serves as cofactor.

The protein localises to the cytoplasm. Its subcellular location is the secreted. The protein resides in the cell surface. The catalysed reaction is (2R)-2-phosphoglycerate = phosphoenolpyruvate + H2O. It participates in carbohydrate degradation; glycolysis; pyruvate from D-glyceraldehyde 3-phosphate: step 4/5. Catalyzes the reversible conversion of 2-phosphoglycerate (2-PG) into phosphoenolpyruvate (PEP). It is essential for the degradation of carbohydrates via glycolysis. This chain is Enolase, found in Cyanothece sp. (strain PCC 7425 / ATCC 29141).